The primary structure comprises 477 residues: Putative 4-(hydroxymethyl)benzenesulfonate dehydrogenase TsaD2 (477 aa).

NAD(+) is bound by residues tryptophan 154–asparagine 155, lysine 178–glutamate 181, and glycine 230–serine 231. Glutamate 252 (proton acceptor) is an active-site residue. NAD(+) is bound at residue leucine 253. The Nucleophile role is filled by cysteine 286. NAD(+) is bound at residue glutamate 381.

The protein belongs to the aldehyde dehydrogenase family. As to quaternary structure, homodimer.

The enzyme catalyses 4-(hydroxymethyl)benzenesulfonate + NAD(+) = 4-formylbenzenesulfonate + NADH + H(+). Involved in the toluene-4-sulfonate degradation pathway. Does not discriminate between the sulfonate and the carboxyl substituents and can also be involved in the p-toluenecarboxylate degradation pathway. This Comamonas testosteroni (Pseudomonas testosteroni) protein is Putative 4-(hydroxymethyl)benzenesulfonate dehydrogenase TsaD2 (tsaD2).